Consider the following 81-residue polypeptide: ATP synthase subunit c, chloroplastic (81 aa).

2 helical membrane-spanning segments follow: residues 3 to 23 (PIIS…ASIG) and 57 to 77 (LAFM…LLFA).

Belongs to the ATPase C chain family. As to quaternary structure, F-type ATPases have 2 components, F(1) - the catalytic core - and F(0) - the membrane proton channel. F(1) has five subunits: alpha(3), beta(3), gamma(1), delta(1), epsilon(1). F(0) has four main subunits: a(1), b(1), b'(1) and c(10-14). The alpha and beta chains form an alternating ring which encloses part of the gamma chain. F(1) is attached to F(0) by a central stalk formed by the gamma and epsilon chains, while a peripheral stalk is formed by the delta, b and b' chains.

It localises to the plastid. The protein resides in the chloroplast thylakoid membrane. Its function is as follows. F(1)F(0) ATP synthase produces ATP from ADP in the presence of a proton or sodium gradient. F-type ATPases consist of two structural domains, F(1) containing the extramembraneous catalytic core and F(0) containing the membrane proton channel, linked together by a central stalk and a peripheral stalk. During catalysis, ATP synthesis in the catalytic domain of F(1) is coupled via a rotary mechanism of the central stalk subunits to proton translocation. Functionally, key component of the F(0) channel; it plays a direct role in translocation across the membrane. A homomeric c-ring of between 10-14 subunits forms the central stalk rotor element with the F(1) delta and epsilon subunits. The polypeptide is ATP synthase subunit c, chloroplastic (Cicer arietinum (Chickpea)).